Here is a 255-residue protein sequence, read N- to C-terminus: Hydroxyacylglutathione hydrolase (255 aa).

Residues H55, H57, D59, H60, H112, D129, and H167 each contribute to the Zn(2+) site.

Belongs to the metallo-beta-lactamase superfamily. Glyoxalase II family. Monomer. Zn(2+) is required as a cofactor.

It carries out the reaction an S-(2-hydroxyacyl)glutathione + H2O = a 2-hydroxy carboxylate + glutathione + H(+). Its pathway is secondary metabolite metabolism; methylglyoxal degradation; (R)-lactate from methylglyoxal: step 2/2. In terms of biological role, thiolesterase that catalyzes the hydrolysis of S-D-lactoyl-glutathione to form glutathione and D-lactic acid. The chain is Hydroxyacylglutathione hydrolase from Halorhodospira halophila (strain DSM 244 / SL1) (Ectothiorhodospira halophila (strain DSM 244 / SL1)).